The chain runs to 328 residues: MFIIKSMLYRLMQMIVVLFVISTLTFILMKLSPGNPVDKILHLDVAQVSTEQINATKDKLGLNDSLLVQWWHWMNHLLHFNLGKSFESKEPVTQILFNYAPITLLISFSTLVVSLCISIPLGIIAAKRFHKWTDKVIRVISTLSISLPAFFIGIILLFIVTNLMNIDSVILSQFILPVITLSLGMCAYIIRLVRSNLLMLLQSNIVQASRLRGMNERYILIHDLLKPTILPIIPLLGISLGSLIGGTVVIENLFDIPGIGYLLMDSIKSRDYPVIQGCVLFIGFFVVIINTIADLLTLLLDPKQRLQLGNPKIKTNTPLISESSDRHA.

6 consecutive transmembrane segments (helical) span residues 11 to 31 (LMQM…LMKL), 104 to 124 (LLIS…LGII), 139 to 159 (VIST…LLFI), 170 to 190 (ILSQ…AYII), 229 to 249 (ILPI…GTVV), and 279 to 299 (VLFI…LTLL). An ABC transmembrane type-1 domain is found at 100–297 (APITLLISFS…IINTIADLLT (198 aa)).

It belongs to the binding-protein-dependent transport system permease family. OppBC subfamily. As to quaternary structure, the complex is composed of two ATP-binding proteins (NikD and NikE), two transmembrane proteins (NikB and NikC) and a solute-binding protein (NikA).

The protein localises to the cell membrane. Its function is as follows. Part of the ABC transporter complex NikABCDE (Opp2) involved in nickel import. Probably responsible for the translocation of the substrate across the membrane. This Staphylococcus aureus (strain USA300) protein is Nickel import system permease protein NikB.